The primary structure comprises 117 residues: Large ribosomal subunit protein uL18 (117 aa).

It belongs to the universal ribosomal protein uL18 family. Part of the 50S ribosomal subunit; part of the 5S rRNA/L5/L18/L25 subcomplex. Contacts the 5S and 23S rRNAs.

Its function is as follows. This is one of the proteins that bind and probably mediate the attachment of the 5S RNA into the large ribosomal subunit, where it forms part of the central protuberance. In Klebsiella pneumoniae (strain 342), this protein is Large ribosomal subunit protein uL18.